A 562-amino-acid chain; its full sequence is Potassium-transporting ATPase potassium-binding subunit (562 aa).

12 consecutive transmembrane segments (helical) span residues 6 to 26, 62 to 82, 132 to 152, 170 to 190, 253 to 273, 283 to 303, 327 to 347, 356 to 376, 379 to 399, 416 to 436, 483 to 503, and 526 to 546; these read FLLI…LGSF, YALA…ALLM, GLAV…FALI, VFRI…LFFV, FVQM…FGQV, LIWA…YAEL, FGIL…CGAV, ALGG…FGGV, GLYG…LMIG, MTAL…ALAI, LLLA…VLAI, and LFIG…FVPA.

This sequence belongs to the KdpA family. The system is composed of three essential subunits: KdpA, KdpB and KdpC.

The protein resides in the cell inner membrane. Part of the high-affinity ATP-driven potassium transport (or Kdp) system, which catalyzes the hydrolysis of ATP coupled with the electrogenic transport of potassium into the cytoplasm. This subunit binds the periplasmic potassium ions and delivers the ions to the membrane domain of KdpB through an intramembrane tunnel. The polypeptide is Potassium-transporting ATPase potassium-binding subunit (Serratia proteamaculans (strain 568)).